Reading from the N-terminus, the 73-residue chain is Putative antitoxin VapB21 (73 aa).

It belongs to the UPF0330 family.

In terms of biological role, possibly the antitoxin component of a type II toxin-antitoxin (TA) system. Its cognate toxin is VapC21 (Potential). The sequence is that of Putative antitoxin VapB21 (vapB21) from Sulfurisphaera tokodaii (strain DSM 16993 / JCM 10545 / NBRC 100140 / 7) (Sulfolobus tokodaii).